Reading from the N-terminus, the 71-residue chain is General transcription factor IIH subunit 5 (71 aa).

Position 69 is a phosphothreonine (Thr-69).

This sequence belongs to the TFB5 family. As to quaternary structure, component of the 7-subunit TFIIH core complex composed of XPB/ERCC3, XPD/ERCC2, GTF2H1, GTF2H2, GTF2H3, GTF2H4 and GTF2H5, which is active in NER. The core complex associates with the 3-subunit CDK-activating kinase (CAK) module composed of CCNH/cyclin H, CDK7 and MNAT1 to form the 10-subunit holoenzyme (holo-TFIIH) active in transcription. Part of TBP-based Pol II pre-initiation complex (PIC), in which Pol II core assembles with general transcription factors and other specific initiation factors including GTF2E1, GTF2E2, GTF2F1, GTF2F2, TCEA1, ERCC2, ERCC3, GTF2H2, GTF2H3, GTF2H4, GTF2H5, GTF2A1, GTF2A2, GTF2B and TBP; this large multi-subunit PIC complex mediates DNA unwinding and targets Pol II core to the transcription start site where the first phosphodiester bond forms.

The protein resides in the nucleus. It is found in the cytoplasm. In terms of biological role, component of the general transcription and DNA repair factor IIH (TFIIH) core complex, which is involved in general and transcription-coupled nucleotide excision repair (NER) of damaged DNA and, when complexed to CAK, in RNA transcription by RNA polymerase II. In NER, TFIIH acts by opening DNA around the lesion to allow the excision of the damaged oligonucleotide and its replacement by a new DNA fragment. In transcription, TFIIH has an essential role in transcription initiation. When the pre-initiation complex (PIC) has been established, TFIIH is required for promoter opening and promoter escape. Phosphorylation of the C-terminal tail (CTD) of the largest subunit of RNA polymerase II by the kinase module CAK controls the initiation of transcription. Necessary for the stability of the TFIIH complex and for the presence of normal levels of TFIIH in the cell. The protein is General transcription factor IIH subunit 5 of Mus musculus (Mouse).